The primary structure comprises 89 residues: HssA/B-like protein 15 (89 aa).

This sequence belongs to the hssA/B family.

The protein is HssA/B-like protein 15 (hssl15) of Dictyostelium discoideum (Social amoeba).